We begin with the raw amino-acid sequence, 153 residues long: Zinc finger protein GIS2 (153 aa).

7 CCHC-type zinc fingers span residues 4–21 (KACYVCGKIGHLAEDCDS), 23–40 (RLCYNCNKPGHVQTDCTM), 47–64 (KQCYNCGETGHVRSECTV), 65–82 (QRCFNCNQTGHISRECPE), 92–109 (VSCYKCGGPNHMAKDCMK), 116–133 (LKCYTCGQAGHMSRDCQN), and 135–152 (RLCYNCNETGHISKDCPK).

It is found in the cytoplasm. Its function is as follows. May act in the sexual differentiation pathway. The sequence is that of Zinc finger protein GIS2 (GIS2) from Saccharomyces cerevisiae (strain ATCC 204508 / S288c) (Baker's yeast).